A 133-amino-acid chain; its full sequence is MVNMFKHIKKSSNNSESWNKKEWQIAEELAVKYLKEKGYKILEKNFKTPYGEIDIIANKKDIIIFVEVKSGKGIRIQPSERVDDKKYLKIVKSAEFYLEFYLKNKNYKISQIDVIEIINGNIKHYENVGWDFT.

Belongs to the UPF0102 family.

The sequence is that of UPF0102 protein Fnod_1509 from Fervidobacterium nodosum (strain ATCC 35602 / DSM 5306 / Rt17-B1).